The primary structure comprises 199 residues: Casparian strip membrane protein 2 (199 aa).

Over 1 to 37 (MMRGSTEIDMPESSSVSKGTAPLIAAPMKEKGGYKKG) the chain is Cytoplasmic. A helical transmembrane segment spans residues 38-58 (IAIFDFILRLAAIATALAAAA). Residues 59–87 (SMGTSDETLPFFTQFFQFQASYDDLPTFQ) lie on the Extracellular side of the membrane. The chain crosses the membrane as a helical span at residues 88–108 (FFVIAMAIVAGYLVLSLPFSI). Residues 109-120 (VAIVRPHAAGPR) lie on the Cytoplasmic side of the membrane. A helical membrane pass occupies residues 121–141 (LLLIILDTVALTLNTAAGAAA). At 142–173 (AAIVYLAHNGNSSTNWLAICQQFGDFCQKNSG) the chain is on the extracellular side. N-linked (GlcNAc...) asparagine glycosylation is present at asparagine 152. A helical transmembrane segment spans residues 174–194 (AVVASFITVVIFVFLLVLSAF). Over 195-199 (ALRRH) the chain is Cytoplasmic.

The protein belongs to the Casparian strip membrane proteins (CASP) family. Homodimer and heterodimers.

It is found in the cell membrane. Its function is as follows. Regulates membrane-cell wall junctions and localized cell wall deposition. Required for establishment of the Casparian strip membrane domain (CSD) and the subsequent formation of Casparian strips, a cell wall modification of the root endodermis that determines an apoplastic barrier between the intraorganismal apoplasm and the extraorganismal apoplasm and prevents lateral diffusion. The protein is Casparian strip membrane protein 2 of Populus trichocarpa (Western balsam poplar).